The sequence spans 555 residues: MAEPEVIHSWSAPRSLSTSLMYSFAQRLDTEVVDEPLYASFLKATGFDRPYRDEVLSKMECNGEKVVKDVIYGSGSKKYRYCKHISKQRLFGLPSELMSRGKHFILIRNPLNILPSFEKVHPPSFLELGLGELVSIYSDLCQMGTPPAVIDADELQRDPETTLRGLCDDLEIPFQASMLKWKAGPIPEDGVWAPWWYKSVHESTGFSSPKKYPRTFPLSHYDLLERSLPLYNILRSHVKHSSSLLSSPLPPPSLPVPENAKLLAWVGDEILPREMAKVSVFDSVVQGGDSVWEGLRIYKGKIFKLEEHLDRLFDSAKALAFDNVPAREEVKEAIFRTLITNGMFDNTHIRLSLTRGKKVTSGMSPAYNRYGCTLIVLAEWKPPVYDNEGGIVLVTATTRRNSPNNLDSKIHHNNLLNNILAKIESNNTNAADAIMLDKDGYVSETNATNIFMVKKGCVLTPHADYCLPGITRATVMELVVKENFILEERRISLSEFHTANEVWTTGTMGELSPVVKIDGRVIGDGKVGPVTRTLQNAYKKLTEDSGVPIPTYQEP.

Belongs to the class-IV pyridoxal-phosphate-dependent aminotransferase family.

The polypeptide is Branched-chain-amino-acid aminotransferase-like protein 1 (Arabidopsis thaliana (Mouse-ear cress)).